Here is a 69-residue protein sequence, read N- to C-terminus: Small ribosomal subunit protein bS21 (69 aa).

Positions 50 to 69 (KAFKRKQAKKVRKLKQKTNR) are disordered.

This sequence belongs to the bacterial ribosomal protein bS21 family.

In Borrelia garinii subsp. bavariensis (strain ATCC BAA-2496 / DSM 23469 / PBi) (Borreliella bavariensis), this protein is Small ribosomal subunit protein bS21.